The primary structure comprises 21 residues: Peptide PGLa-R4 (21 aa).

Leu-21 is subject to Leucine amide.

Expressed by the skin glands.

The protein resides in the secreted. Its function is as follows. Antimicrobial peptide. This chain is Peptide PGLa-R4, found in Xenopus ruwenzoriensis (Uganda clawed frog).